Reading from the N-terminus, the 118-residue chain is DNA-binding protein MmarC6_0793 (118 aa).

The segment covering 1-12 has biased composition (basic and acidic residues); that stretch reads MNPEEIRQRRLQ. Residues 1-33 form a disordered region; the sequence is MNPEEIRQRRLQEMQAKAQEQGAQDPEAQRQMQ. The span at 24-33 shows a compositional bias: low complexity; that stretch reads QDPEAQRQMQ.

It belongs to the PDCD5 family.

In Methanococcus maripaludis (strain C6 / ATCC BAA-1332), this protein is DNA-binding protein MmarC6_0793.